The chain runs to 430 residues: Adenylosuccinate synthetase (430 aa).

GTP is bound by residues 12–18 and 40–42; these read GDEGKGK and GHT. The active-site Proton acceptor is the Asp-13. 2 residues coordinate Mg(2+): Asp-13 and Gly-40. Residues 13–16, 38–41, Thr-130, Arg-144, Gln-224, Thr-239, and Arg-303 each bind IMP; these read DEGK and NAGH. His-41 serves as the catalytic Proton donor. 299–305 lines the substrate pocket; sequence VNTGRKR. Residues Arg-305, 331 to 333, and 413 to 415 each bind GTP; these read KLD and STS.

Belongs to the adenylosuccinate synthetase family. As to quaternary structure, homodimer. Mg(2+) serves as cofactor.

It localises to the cytoplasm. The enzyme catalyses IMP + L-aspartate + GTP = N(6)-(1,2-dicarboxyethyl)-AMP + GDP + phosphate + 2 H(+). Its pathway is purine metabolism; AMP biosynthesis via de novo pathway; AMP from IMP: step 1/2. In terms of biological role, plays an important role in the de novo pathway of purine nucleotide biosynthesis. Catalyzes the first committed step in the biosynthesis of AMP from IMP. The chain is Adenylosuccinate synthetase from Rhodopseudomonas palustris (strain TIE-1).